We begin with the raw amino-acid sequence, 123 residues long: Large ribosomal subunit protein uL18 (123 aa).

It belongs to the universal ribosomal protein uL18 family. As to quaternary structure, part of the 50S ribosomal subunit; part of the 5S rRNA/L5/L18/L25 subcomplex. Contacts the 5S and 23S rRNAs.

In terms of biological role, this is one of the proteins that bind and probably mediate the attachment of the 5S RNA into the large ribosomal subunit, where it forms part of the central protuberance. This is Large ribosomal subunit protein uL18 from Bifidobacterium animalis subsp. lactis (strain AD011).